Reading from the N-terminus, the 149-residue chain is Thioredoxin-like protein 4B (149 aa).

It belongs to the DIM1 family. Homodimer. Interacts with the U5-102 kDa protein subunit of the spliceosome.

The protein localises to the nucleus. Functionally, essential role in pre-mRNA splicing. Required in cell cycle progression for S/G(2) transition. This chain is Thioredoxin-like protein 4B (Txnl4b), found in Mus musculus (Mouse).